We begin with the raw amino-acid sequence, 373 residues long: Probable G-protein coupled receptor 173 (373 aa).

The Extracellular portion of the chain corresponds to 1–26 (MANTTGEPEEVSGALSLPSASAYVKL). N-linked (GlcNAc...) asparagine glycosylation occurs at Asn-3. The chain crosses the membrane as a helical span at residues 27–47 (VLLGLIMCVSLAGNAILSLLV). Residues 48–59 (LKERALHKAPYY) lie on the Cytoplasmic side of the membrane. A helical transmembrane segment spans residues 60–80 (FLLDLCLADGIRSAICFPFVL). The Extracellular portion of the chain corresponds to 81 to 97 (ASVRHGSSWTFSALSCK). A disulfide bridge links Cys-96 with Cys-174. The helical transmembrane segment at 98–118 (IVAFMAVLFCFHAAFMLFCIS) threads the bilayer. Over 119–139 (VTRYMAIAHHRFYAKRMTLWT) the chain is Cytoplasmic. A helical membrane pass occupies residues 140–160 (CAAVICMAWTLSVAMAFPPVF). Topologically, residues 161–188 (DVGTYKFIREEDQCIFEHRYFKANDTLG) are extracellular. N-linked (GlcNAc...) asparagine glycosylation occurs at Asn-184. Residues 189–209 (FMLMLAVLMAATHAVYGKLLL) form a helical membrane-spanning segment. At 210-287 (FEYRHRKMKP…VKGEKQLGRM (78 aa)) the chain is on the cytoplasmic side. A helical transmembrane segment spans residues 288-308 (FYAITLLFLLLWSPYIVACYW). At 309–322 (RVFVKACAVPHRYL) the chain is on the extracellular side. A helical membrane pass occupies residues 323–343 (ATAVWMSFAQAAVNPIVCFLL). The Cytoplasmic segment spans residues 344–373 (NKDLKKCLRTHAPCWGTGGAPAPREPYCVM).

It belongs to the G-protein coupled receptor 1 family. Expressed in the ovary, specifically in granulosa cells of follicles that have passed the primary stage and in oocytes (at protein level). Expressed in preadipocytes.

Its subcellular location is the cell membrane. In terms of biological role, is a receptor for the SMIM20 derived peptides Phoenixin-14 and Phoenixin-20. It mediates the Phoenixin-14 and Phoenixin-20 augmentation of gonadotropin-releasing hormone (GNRH) signaling in the hypothalamus and pituitary gland. In the ovary, it mediates the effects of Phoenixin-14 and Phoenixin-20 induced granulosa cell proliferation during follicular growth. This chain is Probable G-protein coupled receptor 173 (Gpr173), found in Mus musculus (Mouse).